The primary structure comprises 365 residues: MVTCSMRCTEEGLLGATLAFSSGKRKRDSVYSPGDATPGDRGEGEPKCPSVGTKKRAKYSRHRKQSLELRSCDSGVADLYETPSPSPVAPSPTHEPWDTCTPMYDGLGLQNFRDYGQDCYTFNKSLEDKFLAVNCLKNQPQIQAESRCKLISWLIPVHRHLNLGFESLCLTVNILDRFLACTPVASDCFQLVGVTSLLIASKQVETRPPRVKQLLALCCDAFSREQLCNLECIILLKLHFRLGAPTINFFLQHFSLLRVTNEESSDTELSETTKSVTVARGIAELSLADYAFNSYSPSLMAVCCLEIADRMLCHRNPIRARVSDYHESLIQECVGKIDLLVSLNQDSLHRLLPSQFAVKSINVDN.

A disordered region spans residues 22-64 (SGKRKRDSVYSPGDATPGDRGEGEPKCPSVGTKKRAKYSRHRK). The span at 53–64 (TKKRAKYSRHRK) shows a compositional bias: basic residues.

Belongs to the cyclin family.

The protein localises to the cytoplasm. Functionally, specifically required for generation of multiciliated cells, possibly by promoting a cell cycle state compatible with centriole amplification and maturation. Acts downstream of mcidas to promote mother centriole amplification and maturation in preparation for apical docking. The sequence is that of Cyclin-O protein B (ccno-b) from Xenopus laevis (African clawed frog).